Consider the following 220-residue polypeptide: Putative phosphatase YhcW (220 aa).

The Nucleophile role is filled by aspartate 8. A divalent metal cation is bound by residues aspartate 8, aspartate 10, and aspartate 166. The active-site Proton donor is aspartate 10.

The protein belongs to the HAD-like hydrolase superfamily. CbbY/CbbZ/Gph/YieH family. A divalent metal cation serves as cofactor.

The polypeptide is Putative phosphatase YhcW (yhcW) (Bacillus subtilis (strain 168)).